Here is a 382-residue protein sequence, read N- to C-terminus: Gap junction alpha-1 protein (382 aa).

The Cytoplasmic segment spans residues 2–23; sequence GDWSALGKLLDKVQAYSTAGGK. Phosphoserine is present on Ser-5. The helical transmembrane segment at 24–44 threads the bilayer; sequence VWLSVLFIFRILLLGTAVESA. Residues 45-76 are Extracellular-facing; it reads WGDEQSAFRCNTQQPGCENVCYDKSFPISHVR. 2 cysteine pairs are disulfide-bonded: Cys-54/Cys-192 and Cys-187/Cys-198. The helical transmembrane segment at 77 to 97 threads the bilayer; that stretch reads FWVLQIIFVSVPTLLYLAHVF. Residues 98–155 are Cytoplasmic-facing; the sequence is YVMRKEEKLNKKEEELKVAQTDGVNVEMHLKQIEIKKFKYGIEEHGKVKMRGGLLRTY. Residue Lys-144 forms a Glycyl lysine isopeptide (Lys-Gly) (interchain with G-Cter in SUMO) linkage. Residues 156-176 traverse the membrane as a helical segment; the sequence is IISILFKSVFEVAFLLIQWYI. The Extracellular portion of the chain corresponds to 177-207; sequence YGFSLSAVYTCKRDPCPHQVDCFLSRPTEKT. The chain crosses the membrane as a helical span at residues 208 to 228; sequence IFIIFMLVVSLVSLALNIIEL. Topologically, residues 229–382 are cytoplasmic; that stretch reads FYVFFKGVKD…SRPRPDDLEI (154 aa). A Glycyl lysine isopeptide (Lys-Gly) (interchain with G-Cter in SUMO) cross-link involves residue Lys-237. Residues 244–382 form an interaction with NOV region; the sequence is SDPYHATTGP…SRPRPDDLEI (139 aa). Tyr-247 carries the post-translational modification Phosphotyrosine. Ser-255, Ser-257, and Ser-262 each carry phosphoserine. Positions 264–382 are interaction with UBQLN4; it reads KYAYFNGCSS…SRPRPDDLEI (119 aa). The residue at position 271 (Cys-271) is an S-nitrosocysteine. Thr-275 carries the phosphothreonine modification. Phosphoserine is present on residues Ser-306, Ser-314, and Ser-325. Residues 317-332 are compositionally biased toward polar residues; that stretch reads QNRMGQAGSTISNSHA. The disordered stretch occupies residues 317–382; it reads QNRMGQAGST…SRPRPDDLEI (66 aa). Thr-326 bears the Phosphothreonine mark. Ser-328, Ser-330, Ser-341, and Ser-365 each carry phosphoserine. Residues 362–374 are compositionally biased toward low complexity; it reads RPSSRASSRASSR. Ser-368 is modified (phosphoserine; by PKC/PRKCG and PKC/PRKCD). Residues Ser-369 and Ser-373 each carry the phosphoserine modification.

This sequence belongs to the connexin family. Alpha-type (group II) subfamily. In terms of assembly, a connexon is composed of a hexamer of connexins. Interacts with CSNK1D. Interacts with RIC1/CIP150. Interacts (via C-terminus) with TJP1. Interacts (via C-terminus) with SRC (via SH3 domain). Interacts (not ubiquitinated) with UBQLN4 (via UBA domain). Interacts with CNST. Interacts with SGSM3. Interacts with NOV. Interacts with TMEM65. Interacts with ANK3/ANKG and PKP2. Phosphorylation at Ser-325, Ser-328 and Ser-330 by CK1 modulates gap junction assembly. Phosphorylated at Ser-368 by PRKCG; phosphorylation induces disassembly of gap junction plaques and inhibition of gap junction activity. Phosphorylation at Ser-368 by PRKCD triggers its internalization into small vesicles leading to proteasome-mediated degradation. Post-translationally, sumoylated with SUMO1, SUMO2 and SUMO3, which may regulate the level of functional Cx43 gap junctions at the plasma membrane. May be desumoylated by SENP1 or SENP2. In terms of processing, acetylated in the developing cortex; leading to delocalization from the cell membrane. S-nitrosylation at Cys-271 is enriched at the muscle endothelial gap junction in arteries, it augments channel permeability and may regulate of smooth muscle cell to endothelial cell communication. As to expression, expressed in heart, non-sensory epithelial cells, and in fibrocytes of the spiral ligament and the spiral limbus. Expressed in bladder smooth muscle cells (at protein level). Expressed in astrocytes (at protein level).

It localises to the cell membrane. The protein localises to the cell junction. The protein resides in the gap junction. Its subcellular location is the endoplasmic reticulum. In terms of biological role, gap junction protein that acts as a regulator of bladder capacity. A gap junction consists of a cluster of closely packed pairs of transmembrane channels, the connexons, through which materials of low MW diffuse from one cell to a neighboring cell. Negative regulator of bladder functional capacity: acts by enhancing intercellular electrical and chemical transmission, thus sensitizing bladder muscles to cholinergic neural stimuli and causing them to contract. May play a role in cell growth inhibition through the regulation of NOV expression and localization. Plays an essential role in gap junction communication in the ventricles. Functionally, connexin 43 is possibly the ATP-induced pore of mouse macrophages. This chain is Gap junction alpha-1 protein (Gja1), found in Mus musculus (Mouse).